A 255-amino-acid chain; its full sequence is DNA repair protein RecO (255 aa).

This sequence belongs to the RecO family.

Involved in DNA repair and RecF pathway recombination. The protein is DNA repair protein RecO of Listeria welshimeri serovar 6b (strain ATCC 35897 / DSM 20650 / CCUG 15529 / CIP 8149 / NCTC 11857 / SLCC 5334 / V8).